The following is a 96-amino-acid chain: uncharacterized protein (96 aa).

Residues proline 13–isoleucine 35 form a helical membrane-spanning segment.

It is found in the membrane. This is an uncharacterized protein from Archaeoglobus fulgidus (strain ATCC 49558 / DSM 4304 / JCM 9628 / NBRC 100126 / VC-16).